Here is an 85-residue protein sequence, read N- to C-terminus: Large ribosomal subunit protein bL27 (85 aa).

Residues 1–21 (MAHKKGVGSSRNGRDSDGQRL) are disordered.

It belongs to the bacterial ribosomal protein bL27 family.

The sequence is that of Large ribosomal subunit protein bL27 from Geobacter sp. (strain M21).